Reading from the N-terminus, the 100-residue chain is ATP-dependent Clp protease adapter protein ClpS (100 aa).

This sequence belongs to the ClpS family. As to quaternary structure, binds to the N-terminal domain of the chaperone ClpA.

Its function is as follows. Involved in the modulation of the specificity of the ClpAP-mediated ATP-dependent protein degradation. This is ATP-dependent Clp protease adapter protein ClpS from Neisseria meningitidis serogroup B (strain ATCC BAA-335 / MC58).